Reading from the N-terminus, the 192-residue chain is MSLDTVVEDIRDEARARADEIRSEGEERAEEIIDEAEREADDIVDEAEREAERKISQERDQKLSSAKLEAKQARLEARREVLEEVHDDVEAQIADIDGDEREALTRSLLDAAAEEFDGDSVRVHGHEDDADLLEGIVADYDGFEVGEPVDCLGGVVVESDASRVRVNNTFDSILEDVWEENLREISARLFEE.

A disordered region spans residues 1-66 (MSLDTVVEDI…QERDQKLSSA (66 aa)). The span at 8 to 26 (EDIRDEARARADEIRSEGE) shows a compositional bias: basic and acidic residues. Positions 27–49 (ERAEEIIDEAEREADDIVDEAER) are enriched in acidic residues. A compositionally biased stretch (basic and acidic residues) spans 50 to 66 (EAERKISQERDQKLSSA).

It belongs to the V-ATPase E subunit family. In terms of assembly, has multiple subunits with at least A(3), B(3), C, D, E, F, H, I and proteolipid K(x).

It localises to the cell membrane. Functionally, component of the A-type ATP synthase that produces ATP from ADP in the presence of a proton gradient across the membrane. In Natronomonas pharaonis (strain ATCC 35678 / DSM 2160 / CIP 103997 / JCM 8858 / NBRC 14720 / NCIMB 2260 / Gabara) (Halobacterium pharaonis), this protein is A-type ATP synthase subunit E.